A 123-amino-acid chain; its full sequence is Large ribosomal subunit protein bL17 (123 aa).

This sequence belongs to the bacterial ribosomal protein bL17 family. As to quaternary structure, part of the 50S ribosomal subunit. Contacts protein L32.

This is Large ribosomal subunit protein bL17 from Mycoplasma genitalium (strain ATCC 33530 / DSM 19775 / NCTC 10195 / G37) (Mycoplasmoides genitalium).